The primary structure comprises 201 residues: FMN-dependent NADH:quinone oxidoreductase (201 aa).

Residues Ser10, 16–18, 96–99, and 140–143 each bind FMN; these read SQS, MYNF, and SRGG.

It belongs to the azoreductase type 1 family. In terms of assembly, homodimer. It depends on FMN as a cofactor.

It catalyses the reaction 2 a quinone + NADH + H(+) = 2 a 1,4-benzosemiquinone + NAD(+). It carries out the reaction N,N-dimethyl-1,4-phenylenediamine + anthranilate + 2 NAD(+) = 2-(4-dimethylaminophenyl)diazenylbenzoate + 2 NADH + 2 H(+). Quinone reductase that provides resistance to thiol-specific stress caused by electrophilic quinones. Functionally, also exhibits azoreductase activity. Catalyzes the reductive cleavage of the azo bond in aromatic azo compounds to the corresponding amines. In Shigella boydii serotype 4 (strain Sb227), this protein is FMN-dependent NADH:quinone oxidoreductase.